The primary structure comprises 1282 residues: Cytokine receptor (1282 aa).

Residues M1–A23 form the signal peptide. Over I24–A889 the chain is Extracellular. Residues N44, N86, N87, and N114 are each glycosylated (N-linked (GlcNAc...) asparagine). A disulfide bridge connects residues C47 and C106. Fibronectin type-III domains follow at residues P124–E220, P227–A327, P329–D431, E436–D535, A537–A631, Q635–G735, and V736–T836. An intrachain disulfide couples C132 to C142. N-linked (GlcNAc...) asparagine glycosylation is found at N143 and N156. Residues C173 and C183 are joined by a disulfide bond. 9 N-linked (GlcNAc...) asparagine glycosylation sites follow: N184, N230, N235, N278, N298, N310, N376, N448, and N466. The cysteines at positions 472 and 482 are disulfide-linked. 8 N-linked (GlcNAc...) asparagine glycosylation sites follow: N568, N581, N626, N676, N703, N777, N790, and N862. A helical membrane pass occupies residues M890–V910. Topologically, residues Y911–L1282 are cytoplasmic. S976 carries the post-translational modification Phosphoserine. Disordered regions lie at residues T989–S1092 and T1238–R1258. 2 stretches are compositionally biased toward basic and acidic residues: residues V999 to E1009 and N1033 to Q1064.

This sequence belongs to the type I cytokine receptor family. As to quaternary structure, interacts with wdp; the interaction promotes internalization of dome and its subsequent lysosomal degradation; thereby reducing JAK/STAT signaling. Undergoes lysosomal degradation. As to expression, in stage 11 embryos, tracheal pits show highest expression, at stage 14 high expression is detected in the posterior spiracles, gut and head.

The protein resides in the apicolateral cell membrane. Critical for epithelial morphogenesis during oogenesis; border cell migration. Required in the germarium for the polarization of follicle cells during encapsulation of germline cells. Required for embryonic segmentation and trachea specification. Essential receptor molecule for upd and JAK/STAT signaling during oogenesis. In Drosophila melanogaster (Fruit fly), this protein is Cytokine receptor (dome).